The sequence spans 264 residues: Carbohydrate deacetylase (264 aa).

Catalysis depends on Asp-20, which acts as the Proton acceptor. Mg(2+)-binding residues include Asp-21, His-60, and His-127. The active-site Proton donor is the His-215.

Belongs to the YdjC deacetylase family. In terms of assembly, homodimer. It depends on Mg(2+) as a cofactor.

Probably catalyzes the deacetylation of acetylated carbohydrates an important step in the degradation of oligosaccharides. The protein is Carbohydrate deacetylase of Thermus thermophilus (strain ATCC 27634 / DSM 579 / HB8).